A 147-amino-acid polypeptide reads, in one-letter code: Myoglobin (147 aa).

Positions 2–141 (ADFDMVLKCW…IITDMEADYK (140 aa)) constitute a Globin domain. His-60 contacts nitrite. Residue His-60 coordinates O2. A heme b-binding site is contributed by His-89.

Belongs to the globin family. In terms of assembly, monomeric.

The protein localises to the cytoplasm. Its subcellular location is the sarcoplasm. The enzyme catalyses Fe(III)-heme b-[protein] + nitric oxide + H2O = Fe(II)-heme b-[protein] + nitrite + 2 H(+). The catalysed reaction is H2O2 + AH2 = A + 2 H2O. Monomeric heme protein which primary function is to store oxygen and facilitate its diffusion within muscle tissues. Reversibly binds oxygen through a pentacoordinated heme iron and enables its timely and efficient release as needed during periods of heightened demand. Depending on the oxidative conditions of tissues and cells, and in addition to its ability to bind oxygen, it also has a nitrite reductase activity whereby it regulates the production of bioactive nitric oxide. Under stress conditions, like hypoxia and anoxia, it also protects cells against reactive oxygen species thanks to its pseudoperoxidase activity. In Channichthys rhinoceratus (Unicorn icefish), this protein is Myoglobin (mb).